We begin with the raw amino-acid sequence, 869 residues long: Bifunctional uridylyltransferase/uridylyl-removing enzyme (869 aa).

Residues 1–332 form a uridylyltransferase region; sequence MTDTPAERPD…QFDGEATPEP (332 aa). The interval 333–691 is uridylyl-removing; the sequence is LGGGFSLRRG…RRAVPDNDAL (359 aa). One can recognise an HD domain in the interval 450-572; the sequence is VDQHTLMVLR…VGTRERLDYL (123 aa). ACT domains are found at residues 692-774 and 798-869; these read EVFV…RAVP and RISL…LDPV.

Belongs to the GlnD family. Mg(2+) serves as cofactor.

The enzyme catalyses [protein-PII]-L-tyrosine + UTP = [protein-PII]-uridylyl-L-tyrosine + diphosphate. It catalyses the reaction [protein-PII]-uridylyl-L-tyrosine + H2O = [protein-PII]-L-tyrosine + UMP + H(+). Uridylyltransferase (UTase) activity is inhibited by glutamine, while glutamine activates uridylyl-removing (UR) activity. In terms of biological role, modifies, by uridylylation and deuridylylation, the PII regulatory proteins (GlnB and homologs), in response to the nitrogen status of the cell that GlnD senses through the glutamine level. Under low glutamine levels, catalyzes the conversion of the PII proteins and UTP to PII-UMP and PPi, while under higher glutamine levels, GlnD hydrolyzes PII-UMP to PII and UMP (deuridylylation). Thus, controls uridylylation state and activity of the PII proteins, and plays an important role in the regulation of nitrogen assimilation and metabolism. The polypeptide is Bifunctional uridylyltransferase/uridylyl-removing enzyme (Xanthomonas axonopodis pv. citri (strain 306)).